Reading from the N-terminus, the 278-residue chain is MALKKYNPTTPGQRQLVLVDRSALYKGKPVKSLTEGKISNGGRNNTGRITVRFRGGGHKQTYRIVDFKRTKVDVPAKVERLEYDPNRTAFIALIKYEDGEQAYILAPQRLSVGDSVIAGSYVDVKPGNVMPLGNMPVGTIVHNIELKIGKGGQIARSAGTYAQLVGRDHDYVIVRLNSGEQRLVHGRCTATIGAVSNPDHMNISIGKAGRKRWLGRRPHNRGVVMNPIDHPHGGGEGRTSGGRHPVTPWGKPTKGKKTRSNKSTDKFILISRHKRKKK.

Positions 222 to 278 (GVVMNPIDHPHGGGEGRTSGGRHPVTPWGKPTKGKKTRSNKSTDKFILISRHKRKKK) are disordered.

It belongs to the universal ribosomal protein uL2 family. Part of the 50S ribosomal subunit. Forms a bridge to the 30S subunit in the 70S ribosome.

In terms of biological role, one of the primary rRNA binding proteins. Required for association of the 30S and 50S subunits to form the 70S ribosome, for tRNA binding and peptide bond formation. It has been suggested to have peptidyltransferase activity; this is somewhat controversial. Makes several contacts with the 16S rRNA in the 70S ribosome. This chain is Large ribosomal subunit protein uL2, found in Rhodopseudomonas palustris (strain BisB5).